The chain runs to 113 residues: Cell cycle protein GpsB (113 aa).

A coiled-coil region spans residues 36-68; that stretch reads LDMVIKDYSTFTQEIEALQAENIRLVQELDNAP.

Belongs to the GpsB family. In terms of assembly, forms polymers through the coiled coil domains. Interacts with PBP1, MreC and EzrA.

It localises to the cytoplasm. In terms of biological role, divisome component that associates with the complex late in its assembly, after the Z-ring is formed, and is dependent on DivIC and PBP2B for its recruitment to the divisome. Together with EzrA, is a key component of the system that regulates PBP1 localization during cell cycle progression. Its main role could be the removal of PBP1 from the cell pole after pole maturation is completed. Also contributes to the recruitment of PBP1 to the division complex. Not essential for septum formation. The chain is Cell cycle protein GpsB from Listeria monocytogenes serotype 4b (strain CLIP80459).